The sequence spans 208 residues: N-(5'-phosphoribosyl)anthranilate isomerase (208 aa).

The protein belongs to the TrpF family.

It catalyses the reaction N-(5-phospho-beta-D-ribosyl)anthranilate = 1-(2-carboxyphenylamino)-1-deoxy-D-ribulose 5-phosphate. Its pathway is amino-acid biosynthesis; L-tryptophan biosynthesis; L-tryptophan from chorismate: step 3/5. In Methanothrix thermoacetophila (strain DSM 6194 / JCM 14653 / NBRC 101360 / PT) (Methanosaeta thermophila), this protein is N-(5'-phosphoribosyl)anthranilate isomerase.